The sequence spans 100 residues: MFAIIRTGGKQIKVEQGQEIFIEKIKGEVNDKIAFDEILMIDGKIGTPTIKGAKVLGTIIKQGKAKKIRVIRYHPKKNVNKIYGHRQPYTKVKIDEISAK.

Belongs to the bacterial ribosomal protein bL21 family. In terms of assembly, part of the 50S ribosomal subunit. Contacts protein L20.

Functionally, this protein binds to 23S rRNA in the presence of protein L20. The protein is Large ribosomal subunit protein bL21 of Mycoplasma mycoides subsp. mycoides SC (strain CCUG 32753 / NCTC 10114 / PG1).